Reading from the N-terminus, the 198-residue chain is Recombination protein RecR (198 aa).

A C4-type zinc finger spans residues 57-72 (CSVCCNLTDQDPCQIC). One can recognise a Toprim domain in the interval 80–175 (STICVVQEPR…KVTRIARGLP (96 aa)).

It belongs to the RecR family.

May play a role in DNA repair. It seems to be involved in an RecBC-independent recombinational process of DNA repair. It may act with RecF and RecO. The protein is Recombination protein RecR of Symbiobacterium thermophilum (strain DSM 24528 / JCM 14929 / IAM 14863 / T).